Reading from the N-terminus, the 251-residue chain is Transmembrane ascorbate-dependent reductase CYB561 (251 aa).

At Met-1 the chain carries N-acetylmethionine. The Cytoplasmic portion of the chain corresponds to 1–16 (MEGGAAASTPAALPYY). The helical transmembrane segment at 17 to 37 (VAFSQLLGLTLVAMTGAWLGL) threads the bilayer. The Cytochrome b561 domain occupies 19 to 220 (FSQLLGLTLV…FGGAVLYILT (202 aa)). Residues 38-51 (YRGGIAWESDLQFN) are Vesicular-facing. The helical transmembrane segment at 52–72 (AHPLCMVIGLIFLQGDALLVY) threads the bilayer. Heme b is bound by residues His-53, Arg-73, and Lys-80. Residues 73 to 85 (RVFRNEAKRTTKV) are Cytoplasmic-facing. Residues Lys-80 and Lys-84 each coordinate L-ascorbate. A helical transmembrane segment spans residues 86 to 106 (LHGLLHIFALVIALVGLVAVF). Heme b is bound by residues His-87, 116-119 (DLYS), and His-121. Over 107–124 (DYHRKEGYADLYSLHSWC) the chain is Vesicular. The helical transmembrane segment at 125 to 145 (GILVFVLYFVQWLVGFSFFLF) threads the bilayer. The Cytoplasmic segment spans residues 146 to 158 (PGASFSLRSRYRP). L-ascorbate is bound at residue Arg-153. A helical membrane pass occupies residues 159 to 179 (QHIFFGATIFLLSVGTALLGL). Heme b is bound by residues His-160 and Glu-181. The Vesicular portion of the chain corresponds to 180 to 198 (KEALLFKLRDKYSAFEPEG). The chain crosses the membrane as a helical span at residues 199–219 (VLANVLGLLLACFGGAVLYIL). Residues 220–251 (TRADWKRPSQAEEQALSMDFKTLTEGDSPGSQ) lie on the Cytoplasmic side of the membrane. Residue Lys-225 participates in heme b binding. A Phosphoserine modification is found at Ser-247.

Heme b serves as cofactor.

The protein resides in the cytoplasmic vesicle. It localises to the secretory vesicle. The protein localises to the chromaffin granule membrane. It catalyses the reaction monodehydro-L-ascorbate radical(out) + L-ascorbate(in) = monodehydro-L-ascorbate radical(in) + L-ascorbate(out). Its function is as follows. Transmembrane reductase that uses ascorbate as an electron donor in the cytoplasm and transfers electrons across membranes to reduce monodehydro-L-ascorbate radical in the lumen of secretory vesicles. It is therefore involved the regeneration and homeostasis within secretory vesicles of ascorbate which in turn provides reducing equivalents needed to support the activity of intravesicular enzymes. The protein is Transmembrane ascorbate-dependent reductase CYB561 (CYB561) of Pongo abelii (Sumatran orangutan).